The chain runs to 332 residues: Succinylglutamate desuccinylase (332 aa).

Zn(2+)-binding residues include H59, E62, and H151. E215 is a catalytic residue.

This sequence belongs to the AspA/AstE family. Succinylglutamate desuccinylase subfamily. Zn(2+) serves as cofactor.

It catalyses the reaction N-succinyl-L-glutamate + H2O = L-glutamate + succinate. It functions in the pathway amino-acid degradation; L-arginine degradation via AST pathway; L-glutamate and succinate from L-arginine: step 5/5. Its function is as follows. Transforms N(2)-succinylglutamate into succinate and glutamate. This Pseudomonas aeruginosa (strain UCBPP-PA14) protein is Succinylglutamate desuccinylase.